We begin with the raw amino-acid sequence, 2138 residues long: Non-reducing polyketide synthase rads2 (2138 aa).

The segment at 11–249 (LIFGDQTDSW…NPLNIHALQH (239 aa)) is N-terminal acylcarrier protein transacylase (SAT) domain. A Ketosynthase family 3 (KS3) domain is found at 373-804 (SGRIAIVGMA…GGNACMLLED (432 aa)). Residues C549, H684, and H724 each act as for beta-ketoacyl synthase activity in the active site. The segment at 901 to 1184 (VFVFGGQGSH…KGVCTSFVRA (284 aa)) is malonyl-CoA:ACP transacylase (MAT) domain. The active-site For acyl/malonyl transferase activity is S992. Positions 1291–1437 (AQYVVQESPS…KDVQRLQADW (147 aa)) are N-terminal hotdog fold. The PKS/mFAS DH domain maps to 1291 to 1610 (AQYVVQESPS…FHEISNATLK (320 aa)). A product template (PT) domain region spans residues 1303 to 1607 (KKIQVTFRAS…GLEFHEISNA (305 aa)). Residues 1459-1610 (HGHRFQPDIF…FHEISNATLK (152 aa)) are C-terminal hotdog fold. The interval 1618-1666 (SKSVLKPDNAAPLKAPEKKEDATPTAPKKSADPGKEEEEEGDTATPAAV) is disordered. The 75-residue stretch at 1666–1740 (VGEFEVIIQT…DLRRAFAMAP (75 aa)) folds into the Carrier domain. S1700 carries the O-(pantetheine 4'-phosphoryl)serine modification. Positions 1740–1771 (PSSSSSTSASESVSESLDDSSSTSRSATPSSS) are enriched in low complexity. 2 disordered regions span residues 1740–1781 (PSSS…GFVE) and 1807–1828 (QATK…SSPA). Residues 1860 to 2006 (ADGTGSIATY…TRRHLGAMFS (147 aa)) are thioesterase (TE) domain.

It functions in the pathway secondary metabolite biosynthesis. Its function is as follows. Non-reducing polyketide synthase; part of the gene cluster that mediates the biosynthesis of radicicol, a resorcylic acid lactone (RAL) that irreversibly inhibits the HSP90 molecular chaperone, an important target for cancer chemotherapy. The cluster encodes only two apparent post-PKS enzymes, a cytochrome P450 monooxygenase (radP) and a non-heme halogenase (radH) that introduce the epoxide and the chlorine, respectively. If this cluster includes all the genes required for radicicol biosynthesis, the remaining structural features of radicicol are presumably generated by the PKSs rads1 and rads2. The C-2' ketone could arise if the R-PKS rads1 and NR-PKS rads2 each carry out four iterations, in contrast to the five iteration-three iteration split for the hypothemycin PKSs. The origin of the cis 5',6' double bond is not known. The radicicol R-PKS rads1 ER domain may catalyze either double bond isomerization or reduction in the third iteration. This is Non-reducing polyketide synthase rads2 from Floropilus chiversii (Chaetomium chiversii).